We begin with the raw amino-acid sequence, 520 residues long: MAAAAAAAGAAGSAAPAAAAGAPGSGGAPSGSQGVLIGDRLYSGVLITLENCLLPDDKLRFTPSMSSGLDTDTETDLRVVGCELIQAAGILLRLPQVAMATGQVLFQRFFYTKSFVKHSMEHVSMACVHLASKIEEAPRRIRDVINVFHRLRQLRDKKKPVPLLLDQDYVNLKNQIIKAERRVLKELGFCVHVKHPHKIIVMYLQVLECERNQHLVQTSWNYMNDSLRTDVFVRFQPESIACACIYLAARTLEIPLPNRPHWFLLFGATEEEIQEICLKILQLYARKKVDLTHLEGEVEKRKHAIEEAKAQARGLLPGGTQVLDGTSGFSPAPKLVESPKEGKGSKPSPLSVKNTKRRLEGAKKAKADSPVNGLPKGRESRSRSRSREQSYSRSPSRSASPKRRKSDSGSTSGGSKSQSRSRSRSDSPPRQAPRSAPYKGSEIRGSRKSKDCKYPQKPHKSRSRSSSRSRSRSRERADNPGKYKKKSHYYRDQRRERSRSYERTGRRYERDHPGHSRHRR.

Alanine 2 is modified (N-acetylalanine). Cyclin-like stretches follow at residues 83–185 and 198–282; these read ELIQ…RVLK and KIIV…KILQ. A disordered region spans residues 316 to 520; sequence LPGGTQVLDG…DHPGHSRHRR (205 aa). Phosphoserine occurs at positions 330, 338, 348, and 351. Over residues 357 to 367 the composition is skewed to basic and acidic residues; sequence RRLEGAKKAKA. Position 369 is a phosphoserine (serine 369). Residues 376–390 show a composition bias toward basic and acidic residues; that stretch reads KGRESRSRSRSREQS. The segment at 385–423 is RS; the sequence is RSREQSYSRSPSRSASPKRRKSDSGSTSGGSKSQSRSRS. Positions 408-436 are enriched in low complexity; that stretch reads SGSTSGGSKSQSRSRSRSDSPPRQAPRSA. The span at 441–454 shows a compositional bias: basic and acidic residues; sequence SEIRGSRKSKDCKY. Residues 456 to 471 show a composition bias toward basic residues; the sequence is QKPHKSRSRSSSRSRS. 2 stretches are compositionally biased toward basic and acidic residues: residues 472-481 and 489-514; these read RSRERADNPG and YYRDQRRERSRSYERTGRRYERDHPG.

It belongs to the cyclin family. Cyclin L subfamily. Interacts with CDK11A, CDK11B, CDK12, CDK13 and POLR2A, the hyperphosphorylated C-terminal domain (CTD) of RNA polymerase II. May form a ternary complex with CDK11B and casein kinase II (CKII). Interacts with pre-mRNA-splicing factors, including at least SRSF1, SRSF2 AND SRSF7/SLU7. In terms of tissue distribution, widely expressed.

It localises to the nucleus speckle. It is found in the nucleus. The protein localises to the nucleoplasm. Involved in pre-mRNA splicing. May induce cell death, possibly by acting on the transcription and RNA processing of apoptosis-related factors. The protein is Cyclin-L2 (CCNL2) of Homo sapiens (Human).